The chain runs to 522 residues: Putative cysteine ligase BshC (522 aa).

A coiled-coil region spans residues 436–469; that stretch reads SWAQAEKAKALKQLEDIEKKLRKAEERKHDDVIK.

It belongs to the BshC family.

This is Putative cysteine ligase BshC from Cytophaga hutchinsonii (strain ATCC 33406 / DSM 1761 / CIP 103989 / NBRC 15051 / NCIMB 9469 / D465).